The sequence spans 234 residues: Triggering receptor expressed on myeloid cells 1 (234 aa).

The first 20 residues, 1–20, serve as a signal peptide directing secretion; that stretch reads MRKTRLWGLLWMLFVSELRA. Topologically, residues 21-205 are extracellular; sequence ATKLTEEKYE…TDIIRVPVFN (185 aa). Positions 26–134 constitute an Ig-like V-type domain; that stretch reads EEKYELKEGQ…LFDRIRLVVT (109 aa). Residues C41 and C113 are joined by a disulfide bond. 3 N-linked (GlcNAc...) asparagine glycosylation sites follow: N146, N191, and N194. A helical membrane pass occupies residues 206 to 226; it reads IVILLAGGFLSKSLVFSVLFA. The Cytoplasmic segment spans residues 227–234; that stretch reads VTLRSFVP.

As to quaternary structure, monomer. Homomultimer; when activated. Interacts with TYROBP/DAP12. Interacts with TLR4. In terms of processing, glycosylated. In terms of tissue distribution, mostly expressed by immune cells of the myeloid lineage, such as monocytes, macrophages, neutrophils and dendritic cells. Expression is associated with a mature stage of myeloid development. Highly expressed in adult liver, lung and spleen than in corresponding fetal tissue. Also expressed in the lymph node, placenta, spinal cord and heart tissues. Isoform 2 was detected in the lung, liver and mature monocytes.

It localises to the cell membrane. It is found in the secreted. Cell surface receptor that plays important roles in innate and adaptive immunity by amplifying inflammatory responses. Upon activation by various ligands such as PGLYRP1, HMGB1 or HSP70, multimerizes and forms a complex with transmembrane adapter TYROBP/DAP12. In turn, initiates a SYK-mediated cascade of tyrosine phosphorylation, activating multiple downstream mediators such as BTK, MAPK1, MAPK3 or phospholipase C-gamma. This cascade promotes the neutrophil- and macrophage-mediated release of pro-inflammatory cytokines and/or chemokines, as well as their migration and thereby amplifies inflammatory responses that are triggered by bacterial and fungal infections. By also promoting the amplification of inflammatory signals that are initially triggered by Toll-like receptor (TLR) and NOD-like receptor engagement, plays a major role in the pathophysiology of acute and chronic inflammatory diseases of different etiologies including septic shock and atherosclerosis. Functionally, acts as a decoy receptor, counterbalancing TREM1 pro-inflammatory activity through the neutralization of its ligand. In Homo sapiens (Human), this protein is Triggering receptor expressed on myeloid cells 1 (TREM1).